The chain runs to 149 residues: Calmodulin (149 aa).

Ala-2 bears the N-acetylalanine mark. EF-hand domains are found at residues 8–43, 44–79, 81–116, and 117–149; these read EQIA…LGQN, PTEA…KMKD, DSEE…LGEK, and LTDE…MTAK. Asp-21, Asp-23, Asp-25, Thr-27, Glu-32, Asp-59, Asn-61, Thr-63, Glu-68, Asp-94, Asp-96, Asn-98, Tyr-100, and Glu-105 together coordinate Ca(2+). Lys-116 carries the post-translational modification N6,N6,N6-trimethyllysine. 5 residues coordinate Ca(2+): Asp-130, Asp-132, Asp-134, Gln-136, and Glu-141.

This sequence belongs to the calmodulin family.

Calmodulin acts as part of a calcium signal transduction pathway by mediating the control of a large number of enzymes, ion channels, aquaporins and other proteins through calcium-binding. Calcium-binding is required for the activation of calmodulin. Among the enzymes to be stimulated by the calmodulin-calcium complex are a number of protein kinases, such as myosin light-chain kinases and calmodulin-dependent protein kinase type II (CaMK2), and phosphatases. This chain is Calmodulin, found in Myxine glutinosa (Atlantic hagfish).